A 558-amino-acid polypeptide reads, in one-letter code: Glutamine--tRNA ligase (558 aa).

The 'HIGH' region signature appears at 36–46 (PEPNGYLHLGH). ATP-binding positions include 37-39 (EPN) and 43-49 (HLGHAKS). L-glutamine contacts are provided by D69 and Y214. ATP contacts are provided by residues T233, 263-264 (RL), and 271-273 (LSK). The short motif at 270 to 274 (LLSKR) is the 'KMSKS' region element.

Belongs to the class-I aminoacyl-tRNA synthetase family. Monomer.

It localises to the cytoplasm. It catalyses the reaction tRNA(Gln) + L-glutamine + ATP = L-glutaminyl-tRNA(Gln) + AMP + diphosphate. This chain is Glutamine--tRNA ligase, found in Nitrobacter hamburgensis (strain DSM 10229 / NCIMB 13809 / X14).